Here is an 829-residue protein sequence, read N- to C-terminus: Potassium voltage-gated channel unc-103 (829 aa).

A disordered region spans residues 1 to 76; the sequence is MKTAVFGRDS…PRASHSSRRT (76 aa). Topologically, residues 1–123 are cytoplasmic; that stretch reads MKTAVFGRDS…YSPFKAVWDW (123 aa). The span at 46–66 shows a compositional bias: gly residues; sequence GVSGTGGGGSGGLQGAPGAGG. The helical transmembrane segment at 124–144 threads the bilayer; that stretch reads IILLLVIYTAVFTPYVAAFLL. At 145–158 the chain is on the extracellular side; that stretch reads RELQDTAKKSRFTE. The helical transmembrane segment at 159-179 threads the bilayer; the sequence is PLEIVDLIVDIMFIVDIIINF. The Cytoplasmic portion of the chain corresponds to 180–203; it reads RTTYVNENDEACQVVSDPGKIATH. Residues 204–224 traverse the membrane as a helical segment; that stretch reads YFKGWFIIDMVAAVPFDLLLV. At 225–234 the chain is on the extracellular side; it reads STNSDETTTL. The helical; Voltage-sensor transmembrane segment at 235-255 threads the bilayer; sequence IGLLKTARLLRLVRVARKLDR. The Cytoplasmic portion of the chain corresponds to 256-261; that stretch reads YSEYGA. A helical transmembrane segment spans residues 262-282; it reads AVLLLLMATFALIAHWLACIW. Residues 283–327 lie on the Extracellular side of the membrane; sequence YAIGSAELSHKEYTWLHQLSKQLAQPYTSTNGTIPTGGPTLKSRY. Asparagine 313 carries N-linked (GlcNAc...) asparagine glycosylation. The pore-forming intramembrane region spans 328–348; sequence VTSLYFTLSTITSIGFGNVSA. The Extracellular segment spans residues 349 to 354; sequence TTDSEK. The helical transmembrane segment at 355–375 threads the bilayer; sequence IFTIIMMILGSLMYASVFGNV. The Cytoplasmic portion of the chain corresponds to 376–829; it reads SAIIQRLYSG…TPTQETDTIL (454 aa). 458–559 is an a nucleoside 3',5'-cyclic phosphate binding site; it reads AFAGSTPGCL…ILRDDLLDVL (102 aa). Positions 601–674 are disordered; that stretch reads SMNKDRYTTP…PLLRRSTNHH (74 aa). Residues 603–615 show a composition bias toward basic and acidic residues; that stretch reads NKDRYTTPPDGDH. Positions 640–650 are enriched in low complexity; the sequence is SAGSRSSSRCS.

Belongs to the potassium channel family. H (Eag) (TC 1.A.1.20) subfamily. Kv11.1/KCNH2 sub-subfamily. The potassium channel is composed of a homo- or heterotetrameric complex. Interacts with dnj-1; dnj-1 chaperone promotes tetramerization.

Its subcellular location is the cell membrane. Functionally, pore-forming (alpha) subunit of voltage-gated inwardly rectifying potassium channel. Channel properties are modulated by cAMP and subunit assembly. Regulates the movements of the male's copulatory spicules before and during male mating behavior. The polypeptide is Potassium voltage-gated channel unc-103 (Caenorhabditis elegans).